Reading from the N-terminus, the 83-residue chain is Small ribosomal subunit protein bS16 (83 aa).

It belongs to the bacterial ribosomal protein bS16 family.

The sequence is that of Small ribosomal subunit protein bS16 from Shewanella baltica (strain OS223).